A 425-amino-acid chain; its full sequence is F-box/LRR-repeat protein At3g59250 (425 aa).

The F-box domain maps to 6-54 (KDKISNLPEALICHILSFLPIEDSALTSVLSKRWRYLFAFRPNLVFDDS). LRR repeat units lie at residues 86–113 (DLQV…RIES), 138–163 (MLGK…VLNN), 185–210 (CTES…KYSD), 264–293 (CLSA…TIKT), and 294–319 (NQSV…VFEG).

This Arabidopsis thaliana (Mouse-ear cress) protein is F-box/LRR-repeat protein At3g59250.